The chain runs to 93 residues: Large ribosomal subunit protein uL23 (93 aa).

It belongs to the universal ribosomal protein uL23 family. In terms of assembly, part of the 50S ribosomal subunit. Contacts protein L29, and trigger factor when it is bound to the ribosome.

One of the early assembly proteins it binds 23S rRNA. One of the proteins that surrounds the polypeptide exit tunnel on the outside of the ribosome. Forms the main docking site for trigger factor binding to the ribosome. This Sulfurovum sp. (strain NBC37-1) protein is Large ribosomal subunit protein uL23.